We begin with the raw amino-acid sequence, 339 residues long: Leucine-rich repeat-containing protein 75A (339 aa).

Residues 1 to 25 (MGTRQTKGSLAERASPGAAPGPRRE) form a disordered region. The segment covering 11–21 (AERASPGAAPG) has biased composition (low complexity). LRR repeat units lie at residues 203–216 (VDSV…LTDD) and 228–241 (LPRL…GNRL). A disordered region spans residues 294-339 (LPTILELGEGPGTGEEAREGTDQQDPIGSPVTPARGQESTECVIQT). Phosphoserine is present on Ser-322. Phosphothreonine is present on Thr-325. Residues 330-339 (QESTECVIQT) are compositionally biased toward polar residues.

It belongs to the LRRC75 family.

The polypeptide is Leucine-rich repeat-containing protein 75A (Lrrc75a) (Mus musculus (Mouse)).